The following is a 415-amino-acid chain: Mechanosensing system component YbdG (415 aa).

Residues 1-24 lie on the Periplasmic side of the membrane; it reads MQDLISQVEDLAGIEIDHTTSMVM. A helical transmembrane segment spans residues 25–45; it reads IFGIIFLTAVVVHIILHWVVL. At 46–67 the chain is on the cytoplasmic side; the sequence is RTFEKRAIASSRLWLQIITQNK. Residues 68-88 traverse the membrane as a helical segment; sequence LFHRLAFTLQGIIVNIQAVFW. Over 89 to 104 the chain is Periplasmic; the sequence is LQKGTEAADILTTCAQ. Residues 105–125 traverse the membrane as a helical segment; the sequence is LWIMMYALLSVFSLLDVILNL. Residues 126–148 lie on the Cytoplasmic side of the membrane; sequence AQKFPAASQLPLKGIFQGIKLIG. The helical transmembrane segment at 149–169 threads the bilayer; the sequence is AILVGILMISLLIGQSPAILI. Over 170–173 the chain is Periplasmic; the sequence is SGLG. Residues 174–194 traverse the membrane as a helical segment; the sequence is AMAAVLMLVFKDPILGLVAGI. The Cytoplasmic portion of the chain corresponds to 195–415; it reads QLSANDMLKL…IRSLAGAFKQ (221 aa).

It belongs to the MscS (TC 1.A.23) family. As to quaternary structure, homoheptamer.

Its subcellular location is the cell inner membrane. Functionally, functions as a component of a mechanosensing system that transmits signals triggered by external osmotic changes to intracellular factors. The chain is Mechanosensing system component YbdG (ybdG) from Shigella flexneri.